The following is a 117-amino-acid chain: Putative membrane protein insertion efficiency factor (117 aa).

The protein belongs to the UPF0161 family.

Its subcellular location is the cell inner membrane. Functionally, could be involved in insertion of integral membrane proteins into the membrane. The chain is Putative membrane protein insertion efficiency factor from Nitrobacter winogradskyi (strain ATCC 25391 / DSM 10237 / CIP 104748 / NCIMB 11846 / Nb-255).